The following is a 1043-amino-acid chain: Rho GTPase-activating protein gacZ (1043 aa).

The tract at residues 1-44 is disordered; it reads MTTTNTSIFGPRVNNSKFNNNNNNNNNNNNNNNNTSNNNNSNII. The span at 14 to 44 shows a compositional bias: low complexity; it reads NNSKFNNNNNNNNNNNNNNNNTSNNNNSNII. Zn(2+)-binding residues include cysteine 71, cysteine 74, cysteine 82, cysteine 85, cysteine 91, histidine 95, histidine 103, and cysteine 107. The segment at 71-107 adopts an MYND-type; atypical zinc-finger fold; the sequence is CVICKSKNVQVCTGCLMVYYCGAEHQNIDWPNHKSLC. Disordered regions lie at residues 137-163, 199-532, 546-594, 614-690, 706-772, and 801-842; these read SGNRVSNSNNNSSIYSNSTGNINNNNN, HLQQ…NNSN, DGLS…NGNR, FYQS…TNNN, NTSQ…QLSA, and NKVS…NNNN. Low complexity predominate over residues 201–225; the sequence is QQQIQQTQQTQQQPPPTTTSIPTQP. A compositionally biased stretch (polar residues) spans 241–253; the sequence is SFKSSSSGDNTPI. 2 stretches are compositionally biased toward low complexity: residues 254–293 and 307–411; these read NQSPSSSSSSLVSSTNNNNNNNNNNNNNNNINSNSNNMSG and NSIN…TNEE. Over residues 453-466 the composition is skewed to polar residues; sequence GTLKQSSSSDSIYF. Low complexity-rich tracts occupy residues 467–532 and 547–594; these read NNNN…NNSN and GLSY…NGNR. Polar residues predominate over residues 615–625; the sequence is YQSNKNQSNGY. The span at 644 to 671 shows a compositional bias: acidic residues; sequence ENDDSHEECDDDDDDDDGGGQDGDDGLD. 4 stretches are compositionally biased toward low complexity: residues 726 to 736, 752 to 771, 801 to 821, and 829 to 842; these read DTQSQSTNSTT, SSDDLQQQQTQTQQQQSQLS, NKVSEVTSKSKSSTSVNNNNN, and NNNNNNNNINNNNN. Residues 825 to 852 are a coiled coil; it reads DHNENNNNNNNNINNNNNNNNNNIENII. Positions 855-1043 constitute a Rho-GAP domain; the sequence is IPLEEAVKKS…FGIQTYNYNS (189 aa).

It localises to the cytoplasm. Functionally, rho GTPase-activating protein involved in the signal transduction pathway. The chain is Rho GTPase-activating protein gacZ (gacZ) from Dictyostelium discoideum (Social amoeba).